The chain runs to 118 residues: Large ribosomal subunit protein bL20 (118 aa).

The protein belongs to the bacterial ribosomal protein bL20 family.

Its function is as follows. Binds directly to 23S ribosomal RNA and is necessary for the in vitro assembly process of the 50S ribosomal subunit. It is not involved in the protein synthesizing functions of that subunit. The sequence is that of Large ribosomal subunit protein bL20 from Campylobacter curvus (strain 525.92).